The primary structure comprises 201 residues: Large ribosomal subunit protein uL18 (201 aa).

This sequence belongs to the universal ribosomal protein uL18 family. Part of the 50S ribosomal subunit. Contacts the 5S and 23S rRNAs.

In terms of biological role, this is one of the proteins that bind and probably mediate the attachment of the 5S RNA into the large ribosomal subunit, where it forms part of the central protuberance. The polypeptide is Large ribosomal subunit protein uL18 (Thermococcus onnurineus (strain NA1)).